Here is a 939-residue protein sequence, read N- to C-terminus: MSVLSKIMRAGEGKILRKLHRIADQVNSIEEDFVDLSDAELRALTDEYKQRYADGESLDDLLPEAFATVREAAKRVLGQRHYDVQMMGGAALHLGYVAEMKTGEGKTLVGTLPAYLNALSGDGVHLITVNDYLAERDSEMMGRVHKFLGLSVGCILANMTPAQRREQYGCDITYGTNNEFGFDYLRDNMAWSQDELVQRGHNFAVVDEVDSILVDEARTPLIISGPADQATKWYGDFAKLVTRLKKGEAGNTLKGIEETGDYEVDEKKRTVAIHESGVAKVEDWLGIDNLYESVNTPLVGYLNNAIKAKELFKKDKDYVVIDGEVMIVDEHTGRILAGRRYNEGMHQAIEAKEGVDIKDENQTLATITLQNFFRLYNKLSGMTGTAMTEAAEFHQIYKLGVVPIPTNKPMVRKDQSDLIYRTEVAKFDAVVDDIAEKHEKGQPILVGTTSVEKSEYLSQQLSKRGIQHEVLNAKQHDREATIVAQAGRKGAVTVATNMAGRGTDIKLGGNPDDLAEAELRQRGLDPEEHIEEWAAALPAALERAEKAVKAEFEEVKELGGLYVLGTERHESRRIDNQLRGRSGRQGDPGESRFYLSLGDDLMRLFKAQMVERVMSMANVPDDVPIENKMVTRAIASAQSQVETQNFETRKNVLKYDEVLNRQREVIYGERRRVLEGEDLQEQIHHFMDDTIDAYIEAETAEGFAEEWDLDRLWGAFKQLYPVKVTVDELEEAAGDRAGLTAEFISESIKDDIHEQYEQRETQLGSEIMRELERRVVLSVLDRKWREHLYEMDYLQEGIGLRAMAQKDPLVEYQREGFDMFTAMMDGIKEESVGYLFNLEVQVEQQVEEVPVEDEKPSLEKEDAVPAQAGARPEIRAKGLEAPQRPDRLHFSAPTVDGEGGIIEGDFSSDDDEEPVRSEADGLTRAERRKQSKGGRRRKK.

Residues Gln85, 103–107 (GEGKT), and Asp504 contribute to the ATP site. Positions 848–939 (EVPVEDEKPS…QSKGGRRRKK (92 aa)) are disordered. Basic and acidic residues-rich tracts occupy residues 852-863 (EDEKPSLEKEDA), 872-889 (PEIR…DRLH), and 914-925 (PVRSEADGLTRA). Residues 926 to 939 (ERRKQSKGGRRRKK) are compositionally biased toward basic residues.

The protein belongs to the SecA family. As to quaternary structure, monomer and homodimer. Part of the essential Sec protein translocation apparatus which comprises SecA, SecYEG and auxiliary proteins SecDF. Other proteins may also be involved.

It localises to the cell membrane. The protein localises to the cytoplasm. It carries out the reaction ATP + H2O + cellular proteinSide 1 = ADP + phosphate + cellular proteinSide 2.. In terms of biological role, part of the Sec protein translocase complex. Interacts with the SecYEG preprotein conducting channel. Has a central role in coupling the hydrolysis of ATP to the transfer of proteins into and across the cell membrane, serving as an ATP-driven molecular motor driving the stepwise translocation of polypeptide chains across the membrane. This chain is Protein translocase subunit SecA 1, found in Streptomyces avermitilis (strain ATCC 31267 / DSM 46492 / JCM 5070 / NBRC 14893 / NCIMB 12804 / NRRL 8165 / MA-4680).